Here is a 217-residue protein sequence, read N- to C-terminus: 3,4-dihydroxy-2-butanone 4-phosphate synthase (217 aa).

D-ribulose 5-phosphate-binding positions include 37–38 (RE), aspartate 42, 150–154 (RGGHT), and glutamate 174. A Mg(2+)-binding site is contributed by glutamate 38. Histidine 153 lines the Mg(2+) pocket.

It belongs to the DHBP synthase family. In terms of assembly, homodimer. Mg(2+) serves as cofactor. Requires Mn(2+) as cofactor.

It carries out the reaction D-ribulose 5-phosphate = (2S)-2-hydroxy-3-oxobutyl phosphate + formate + H(+). It participates in cofactor biosynthesis; riboflavin biosynthesis; 2-hydroxy-3-oxobutyl phosphate from D-ribulose 5-phosphate: step 1/1. Catalyzes the conversion of D-ribulose 5-phosphate to formate and 3,4-dihydroxy-2-butanone 4-phosphate. The sequence is that of 3,4-dihydroxy-2-butanone 4-phosphate synthase from Klebsiella pneumoniae (strain 342).